Consider the following 877-residue polypeptide: DNA polymerase I (877 aa).

Residues 177–270 enclose the 5'-3' exonuclease domain; sequence TPAQFIDLKA…LEDLVYSGPD (94 aa). The 3'-5' exonuclease domain occupies 302–465; sequence DFTIVDQISQ…TEPILLEKLS (164 aa).

The protein belongs to the DNA polymerase type-A family. Single-chain monomer with multiple functions.

It catalyses the reaction DNA(n) + a 2'-deoxyribonucleoside 5'-triphosphate = DNA(n+1) + diphosphate. In terms of biological role, in addition to polymerase activity, this DNA polymerase exhibits 3'-5' and 5'-3' exonuclease activity. This chain is DNA polymerase I (polA), found in Streptococcus pneumoniae serotype 4 (strain ATCC BAA-334 / TIGR4).